The sequence spans 233 residues: Proteasome subunit beta type-6 (233 aa).

Positions 1-12 (MDLNLDAPHSMG) are cleaved as a propeptide — removed in mature form. Residue Thr-13 is the Nucleophile of the active site.

It belongs to the peptidase T1B family. As to quaternary structure, component of the 20S core complex of the 26S proteasome. The 26S proteasome is composed of a core protease (CP), known as the 20S proteasome, capped at one or both ends by the 19S regulatory particle (RP/PA700). The 20S proteasome core is composed of 28 subunits that are arranged in four stacked rings, resulting in a barrel-shaped structure. The two end rings are each formed by seven alpha subunits, and the two central rings are each formed by seven beta subunits. The catalytic chamber with the active sites is on the inside of the barrel.

It is found in the cytoplasm. Its subcellular location is the nucleus. The enzyme catalyses Cleavage of peptide bonds with very broad specificity.. Functionally, the proteasome is a multicatalytic proteinase complex which is characterized by its ability to cleave peptides with Arg, Phe, Tyr, Leu, and Glu adjacent to the leaving group at neutral or slightly basic pH. The proteasome has an ATP-dependent proteolytic activity. The polypeptide is Proteasome subunit beta type-6 (PBA1) (Arabidopsis thaliana (Mouse-ear cress)).